A 302-amino-acid chain; its full sequence is MTEETDLEDLRRGTDLVKRGFAKMQKGGVIMDVVNREQARIAEDAGAVAVMHLESVPADIRKRGGVARMADPSKLEEIIEEVSIPVMGKARIGHTAEAQILEAAGADMVDESEVLTQADDRYHIDKREFTAPFVCGARNLAEALRRIDEGAAMIRTKGEAGTGDVNQAVTHQRNIQRSIGKLEGMAYEERDEWAREHGAPRRLVHETADRGRLPVVNFAAGGIATPADAALMMQHGCDGIFVGSGIFGAENPQAMGESVVAAVNNYDDPEQLKEIAKNPGKGMKGQANADLDEEEQLQGRGV.

Asp-32 provides a ligand contact to D-ribose 5-phosphate. The active-site Schiff-base intermediate with D-ribose 5-phosphate is Lys-89. Gly-161 contributes to the D-ribose 5-phosphate binding site. Arg-173 serves as a coordination point for D-glyceraldehyde 3-phosphate. D-ribose 5-phosphate is bound by residues Gly-222 and 243–244; that span reads GS. The tract at residues 275 to 302 is disordered; the sequence is IAKNPGKGMKGQANADLDEEEQLQGRGV.

The protein belongs to the PdxS/SNZ family. In the presence of PdxT, forms a dodecamer of heterodimers.

It carries out the reaction aldehydo-D-ribose 5-phosphate + D-glyceraldehyde 3-phosphate + L-glutamine = pyridoxal 5'-phosphate + L-glutamate + phosphate + 3 H2O + H(+). Its pathway is cofactor biosynthesis; pyridoxal 5'-phosphate biosynthesis. Functionally, catalyzes the formation of pyridoxal 5'-phosphate from ribose 5-phosphate (RBP), glyceraldehyde 3-phosphate (G3P) and ammonia. The ammonia is provided by the PdxT subunit. Can also use ribulose 5-phosphate and dihydroxyacetone phosphate as substrates, resulting from enzyme-catalyzed isomerization of RBP and G3P, respectively. This Haloarcula marismortui (strain ATCC 43049 / DSM 3752 / JCM 8966 / VKM B-1809) (Halobacterium marismortui) protein is Pyridoxal 5'-phosphate synthase subunit PdxS.